Consider the following 468-residue polypeptide: Serine/threonine-protein phosphatase 2A 55 kDa regulatory subunit B beta isoform (468 aa).

7 WD repeats span residues 47–86, 112–153, 196–234, 245–285, 304–342, 359–400, and 435–468; these read SSADIISTVEFNNTGELLATGDKGGRVVIFQREQENKNQP, EIEE…KRPE, AHTYHINSISVNSDYETYMSADDLRINLWNLEITNRSFN, ELTE…LCDK, EIISSISDVKFNHSGRYIMTRDYLTVKVWDLNMENRPIE, ENDC…DVTL, and DFSKKILHTAWHPSENIIAVAATNNLYIFQDKVN.

Belongs to the phosphatase 2A regulatory subunit B family. As to quaternary structure, PP2A consists of a common heterodimeric core enzyme, composed of a 36 kDa catalytic subunit (subunit C) and a 65 kDa constant regulatory subunit (PR65 or subunit A), that associates with a variety of regulatory subunits.

Its subcellular location is the cytoplasm. The protein resides in the cytoskeleton. It is found in the membrane. Functionally, the B regulatory subunit might modulate substrate selectivity and catalytic activity, and might also direct the localization of the catalytic enzyme to a particular subcellular compartment. Negatively controls the initiation of oocyte maturation. The polypeptide is Serine/threonine-protein phosphatase 2A 55 kDa regulatory subunit B beta isoform (ppp2r2b) (Xenopus laevis (African clawed frog)).